The primary structure comprises 89 residues: Putative antitoxin VapB42 (89 aa).

In terms of biological role, possibly the antitoxin component of a type II toxin-antitoxin (TA) system. Its cognate toxin is VapC42 (Potential). This is Putative antitoxin VapB42 (vapB42) from Mycobacterium tuberculosis (strain CDC 1551 / Oshkosh).